Here is a 153-residue protein sequence, read N- to C-terminus: MKCPYCGHPDTRVVDSRPSDEGMAIRRRRECPSCGRRFTTYERTQLEPLMVVKRDGRKEPFNPDKLLRGLLLACEKRPVSEEVLRRFAYTFEDQVSGPEITSEEIGLKALAFLKELDHVAYIRFASVYREFDSVERFIEEIRSLASLDKKEGD.

Residues Cys3 to Cys34 fold into a zinc finger. One can recognise an ATP-cone domain in the interval Leu49 to Arg136.

This sequence belongs to the NrdR family. Requires Zn(2+) as cofactor.

In terms of biological role, negatively regulates transcription of bacterial ribonucleotide reductase nrd genes and operons by binding to NrdR-boxes. This chain is Transcriptional repressor NrdR, found in Thermus thermophilus (strain ATCC BAA-163 / DSM 7039 / HB27).